A 396-amino-acid chain; its full sequence is Flavohemoprotein (396 aa).

A Globin domain is found at 1 to 136 (MLDAQTIATV…LANVFINREA (136 aa)). His-85 provides a ligand contact to heme b. Catalysis depends on charge relay system residues Tyr-95 and Glu-135. The reductase stretch occupies residues 147-396 (GGWEGTRDFR…YECFGPHKVL (250 aa)). Positions 150 to 255 (EGTRDFRIVA…VAPAGDFFMA (106 aa)) constitute an FAD-binding FR-type domain. FAD contacts are provided by residues Tyr-188 and 204 to 207 (RQYS). An NADP(+)-binding site is contributed by 268–273 (GVGQTP). 389–392 (CFGP) contributes to the FAD binding site.

It belongs to the globin family. Two-domain flavohemoproteins subfamily. This sequence in the C-terminal section; belongs to the flavoprotein pyridine nucleotide cytochrome reductase family. Heme b serves as cofactor. FAD is required as a cofactor.

The enzyme catalyses 2 nitric oxide + NADPH + 2 O2 = 2 nitrate + NADP(+) + H(+). It carries out the reaction 2 nitric oxide + NADH + 2 O2 = 2 nitrate + NAD(+) + H(+). Its function is as follows. Is involved in NO detoxification in an aerobic process, termed nitric oxide dioxygenase (NOD) reaction that utilizes O(2) and NAD(P)H to convert NO to nitrate, which protects the bacterium from various noxious nitrogen compounds. Therefore, plays a central role in the inducible response to nitrosative stress. The chain is Flavohemoprotein from Escherichia coli O6:H1 (strain CFT073 / ATCC 700928 / UPEC).